The primary structure comprises 982 residues: Coatomer subunit beta (982 aa).

HEAT repeat units lie at residues 16-53 (SGAP…NGEP), 130-167 (ELVE…RFPE), 241-278 (YDKG…SPTA), and 317-352 (LQDS…NQNS).

As to quaternary structure, oligomeric complex that consists of at least the alpha, beta, beta', gamma, delta, epsilon and zeta subunits.

It localises to the cytoplasm. The protein resides in the golgi apparatus membrane. Its subcellular location is the cytoplasmic vesicle. It is found in the COPI-coated vesicle membrane. Its function is as follows. The coatomer is a cytosolic protein complex that binds to dilysine motifs and reversibly associates with Golgi non-clathrin-coated vesicles, which further mediate biosynthetic protein transport from the ER, via the Golgi up to the trans Golgi network. Coatomer complex is required for budding from Golgi membranes, and is essential for the retrograde Golgi-to-ER transport of dilysine-tagged proteins. This Trypanosoma brucei brucei protein is Coatomer subunit beta.